A 363-amino-acid polypeptide reads, in one-letter code: Ataxin-3 (363 aa).

The 180-residue stretch at 1–180 folds into the Josephin domain; sequence MESIFHERQE…DCEADQLLQM (180 aa). The Nucleophile role is filled by C14. Residue H119 is the Proton acceptor of the active site. N134 is an active-site residue. Residues 192 to 209 are compositionally biased toward basic and acidic residues; it reads IGEETAQSRDQRLPRSDV. Residues 192 to 212 form a disordered region; that stretch reads IGEETAQSRDQRLPRSDVDQA. 3 UIM domains span residues 227-246, 247-266, and 337-356; these read EDEE…IDME, DEEA…SRQS, and SEED…ARNH. Over residues 260 to 290 the composition is skewed to polar residues; that stretch reads MQGSRQSEFSNSLPQNASQPPHTSQTDSLSS. The interval 260-363 is disordered; it reads MQGSRQSEFS…RNHLSTEEKK (104 aa). A compositionally biased stretch (basic and acidic residues) spans 353 to 363; that stretch reads ARNHLSTEEKK.

Widely expressed.

It localises to the nucleus matrix. The protein resides in the nucleus. Its subcellular location is the lysosome membrane. It carries out the reaction Thiol-dependent hydrolysis of ester, thioester, amide, peptide and isopeptide bonds formed by the C-terminal Gly of ubiquitin (a 76-residue protein attached to proteins as an intracellular targeting signal).. Functionally, deubiquitinating enzyme involved in protein homeostasis maintenance, transcription, cytoskeleton regulation, myogenesis and degradation of misfolded chaperone substrates. Binds long polyubiquitin chains and trims them, while it has weak or no activity against chains of 4 or less ubiquitins. Involved in degradation of misfolded chaperone substrates via its interaction with STUB1/CHIP: recruited to monoubiquitinated STUB1/CHIP, and restricts the length of ubiquitin chain attached to STUB1/CHIP substrates and preventing further chain extension. Interacts with key regulators of transcription and represses transcription: acts as a histone-binding protein that regulates transcription. Acts as a negative regulator of mTORC1 signaling in response to amino acid deprivation by mediating deubiquitination of RHEB, thereby promoting RHEB inactivation by the TSC-TBC complex. Regulates autophagy via the deubiquitination of 'Lys-402' of BECN1 leading to the stabilization of BECN1. The chain is Ataxin-3 (ATXN3) from Gallus gallus (Chicken).